The primary structure comprises 451 residues: UDP-N-acetylmuramoylalanine--D-glutamate ligase (451 aa).

119-125 contacts ATP; the sequence is GSNGKTT.

It belongs to the MurCDEF family.

The protein resides in the cytoplasm. The catalysed reaction is UDP-N-acetyl-alpha-D-muramoyl-L-alanine + D-glutamate + ATP = UDP-N-acetyl-alpha-D-muramoyl-L-alanyl-D-glutamate + ADP + phosphate + H(+). The protein operates within cell wall biogenesis; peptidoglycan biosynthesis. Functionally, cell wall formation. Catalyzes the addition of glutamate to the nucleotide precursor UDP-N-acetylmuramoyl-L-alanine (UMA). This Geobacillus sp. (strain WCH70) protein is UDP-N-acetylmuramoylalanine--D-glutamate ligase.